A 198-amino-acid polypeptide reads, in one-letter code: MTLRCLEPSGNGGEGTRSQWGTAGSAEEPSPQAARLAKALRELGQTGWYWGSMTVNEAKEKLKEAPEGTFLIRDSSHSDYLLTISVKTSAGPTNLRIEYQDGKFRLDSIICVKSKLKQFDSVVHLIDYYVQMCKDKRTGPEAPRNGTVHLYLTKPLYTSAPSLQHLCRLTINKCTGAIWGLPLPTRLKDYLEEYKFQV.

The segment at 1 to 29 is disordered; sequence MTLRCLEPSGNGGEGTRSQWGTAGSAEEP. Positions 1–75 are interaction with AREL1; that stretch reads MTLRCLEPSG…PEGTFLIRDS (75 aa). A Phosphoserine modification is found at Ser-30. The region spanning 48 to 156 is the SH2 domain; the sequence is WYWGSMTVNE…TVHLYLTKPL (109 aa). Ser-52 carries the phosphoserine; by PKC modification. Residues 151 to 197 enclose the SOCS box domain; it reads YLTKPLYTSAPSLQHLCRLTINKCTGAIWGLPLPTRLKDYLEEYKFQ. Lys-173 participates in a covalent cross-link: Glycyl lysine isopeptide (Lys-Gly) (interchain with G-Cter in ubiquitin).

In terms of assembly, substrate-recognition component of the ECS(SOCS2) complex, composed of SOCS2, CUL5, ELOB, ELOC and RNF7/RBX2. Interacts with IGF1R. Interacts with DCUN1D1. Post-translationally, ubiquitinated; mediated by AREL1 and leading to its subsequent proteasomal degradation. Ubiquitination is dependent on its phosphorylation at Ser-52, by PKC. Ubiquitination is stimulated by LPS. In terms of processing, phosphorylation at Ser-52 by PKC facilitates its ubiquitination and proteasomal degradation. In terms of tissue distribution, high expression in heart, placenta, lung, kidney and prostate. Predominantly expressed in pulmonary epithelia cells, specifically type II pneumocytes.

The protein resides in the cytoplasm. It participates in protein modification; protein ubiquitination. Its activity is regulated as follows. Substrate-binding is prevented by the covalent inhibitor MN551 that cross-links with Cys-111. Also inhibited by a MN551 derivative, MN714, which contains a pivaloyloxymethyl that allows cell permeability. Substrate-recognition component of a cullin-5-RING E3 ubiquitin-protein ligase complex (ECS complex, also named CRL5 complex), which mediates the ubiquitination and subsequent proteasomal degradation of target proteins, such as EPOR and GHR. Specifically recognizes and binds phosphorylated proteins via its SH2 domain, promoting their ubiquitination. The ECS(SOCS2) complex acts as a key regulator of growth hormone receptor (GHR) levels by mediating ubiquitination and degradation of GHR, following GHR phosphorylation by JAK2. The ECS(SOCS2) also catalyzes ubiquitination and degradation of JAK2-phosphorylated EPOR. The protein is Suppressor of cytokine signaling 2 of Homo sapiens (Human).